The chain runs to 114 residues: UPF0342 protein NWMN_1737 (114 aa).

Belongs to the UPF0342 family.

The chain is UPF0342 protein NWMN_1737 from Staphylococcus aureus (strain Newman).